Here is an 806-residue protein sequence, read N- to C-terminus: ATP-dependent zinc metalloprotease FTSH 11, chloroplastic/mitochondrial (806 aa).

The N-terminal 63 residues, 1–63, are a transit peptide targeting the chloroplast and mitochondrion; the sequence is MSSSTLQASL…RFRPLPCSLR (63 aa). Basic and acidic residues predominate over residues 106-116; it reads FVGGEETKSGG. Positions 106-130 are disordered; that stretch reads FVGGEETKSGGEEAEVSNGVTEGKE. Residues 301 to 321 traverse the membrane as a helical segment; the sequence is LVSTILFTVAVGLVWIMGAAA. 402 to 409 serves as a coordination point for ATP; it reads GAPGTGKT. His620 contributes to the Zn(2+) binding site. Residue Glu621 is part of the active site. Zn(2+) contacts are provided by His624 and Asp698.

It in the N-terminal section; belongs to the AAA ATPase family. This sequence in the C-terminal section; belongs to the peptidase M41 family. As to quaternary structure, homooligomer. The cofactor is Zn(2+).

It is found in the mitochondrion inner membrane. The protein localises to the plastid. Its subcellular location is the chloroplast thylakoid membrane. Functionally, probable ATP-dependent zinc metallopeptidase. Involved in the assembly and/or stability of the complexes I and V. Involved in thermotolerance but not in high light stress resistance or in the assembly/stability of the complexes I and V of the mitochondrial oxidative phosphorylation system. This Arabidopsis thaliana (Mouse-ear cress) protein is ATP-dependent zinc metalloprotease FTSH 11, chloroplastic/mitochondrial (FTSH11).